Consider the following 212-residue polypeptide: Eggshell protein 1 (212 aa).

Residues 1–27 form the signal peptide; sequence MKSSLTLLFLAAIGYTIAYPPPSDYDS. A disordered region spans residues 155 to 212; sequence RKNGHGKGGKGGNGGGGGKGGGKGGGNGKGNGKGGGGKNGGGKGGNGGKGGSYAPSYY. Residues 163–205 show a composition bias toward gly residues; that stretch reads GKGGNGGGGGKGGGKGGGNGKGNGKGGGGKNGGGKGGNGGKGG.

As to expression, detected only in mature female parasites.

The chain is Eggshell protein 1 (ESG-1) from Schistosoma japonicum (Blood fluke).